We begin with the raw amino-acid sequence, 529 residues long: Delayed-rectifier potassium channel regulatory subunit KCNS1 (529 aa).

Topologically, residues 1-217 (MLMLLVRGTR…LTMENPGYSL (217 aa)) are cytoplasmic. Residues 218–239 (PSKLFSCVSISVVLASIAAMCI) form a helical membrane-spanning segment. Topologically, residues 240–270 (HSLPEYQAREAAAAVAAVAAGRSPEGVRDDP) are extracellular. A helical membrane pass occupies residues 271–293 (VLRRLEYFCIAWFSFEVSSRLLL). The Cytoplasmic segment spans residues 294 to 304 (APSTRNFFCHP). A helical transmembrane segment spans residues 305–322 (LNLIDIVSVLPFYLTLLA). Residues 323–340 (GVALGDQGGTGGKELGHL) lie on the Extracellular side of the membrane. The helical; Voltage-sensor transmembrane segment at 341-361 (GKVVQVFRLMRIFRVLKLARH) threads the bilayer. At 362-376 (STGLRSLGATLKHSY) the chain is on the cytoplasmic side. The chain crosses the membrane as a helical span at residues 377 to 398 (REVGILLLYLAVGVSVFSGVAY). Topologically, residues 399-411 (TAEKEEDVGFNTI) are extracellular. Residues 412-423 (PACWWWGTVSMT) constitute an intramembrane region (helical). Residues 424-429 (TVGYGD) carry the Selectivity filter motif. The stretch at 424–431 (TVGYGDVV) is an intramembrane region. At 432 to 438 (PVTVAGK) the chain is on the extracellular side. Residues 439–467 (LAASGCILGGILVVALPITIIFNKFSHFY) traverse the membrane as a helical segment. Topologically, residues 468–529 (RRQKALEAAV…PSEPPHPQMY (62 aa)) are cytoplasmic. The disordered stretch occupies residues 500–529 (LETSREISQEGRSADLETQAPSEPPHPQMY). The segment covering 502 to 514 (TSREISQEGRSAD) has biased composition (basic and acidic residues).

This sequence belongs to the potassium channel family. S (TC 1.A.1.2) subfamily. Kv9.1/KCNS1 sub-subfamily. Heterotetramer with KCNB1. Heterotetramer with KCNB2. Does not form homomultimers.

The protein resides in the cell membrane. Its function is as follows. Potassium channel regulatory subunit that modulate the delayed rectifier voltage-gated potassium channel activity of KCNB1 and KCNB2 by altering their kinetics, expression levels, and shifting the half-inactivation potential to more polarized values. While it does not form functional channels on its own, it can form functional heterotetrameric channels with KCNB1 and KCNB2. Each regulatory subunit has unique regulatory properties that can lead to extensive inhibition, significant changes in kinetics, and/or substantial shifts in the voltage dependencies of the inactivation process. This Colobus guereza (Mantled guereza) protein is Delayed-rectifier potassium channel regulatory subunit KCNS1.